Here is a 217-residue protein sequence, read N- to C-terminus: 3-oxoadipate CoA-transferase subunit B (217 aa).

Residue Glu-50 is part of the active site.

It belongs to the 3-oxoacid CoA-transferase subunit B family. In terms of assembly, heterodimer.

The catalysed reaction is 3-oxoadipate + succinyl-CoA = 3-oxoadipyl-CoA + succinate. It participates in aromatic compound metabolism; beta-ketoadipate pathway; acetyl-CoA and succinyl-CoA from 3-oxoadipate: step 1/2. The protein is 3-oxoadipate CoA-transferase subunit B (pcaJ) of Acinetobacter baylyi (strain ATCC 33305 / BD413 / ADP1).